We begin with the raw amino-acid sequence, 357 residues long: UDP-N-acetylglucosamine--N-acetylmuramyl-(pentapeptide) pyrophosphoryl-undecaprenol N-acetylglucosamine transferase (357 aa).

Residues 15–17, Asn124, Arg165, Ser194, and Gln288 each bind UDP-N-acetyl-alpha-D-glucosamine; that span reads TGG.

Belongs to the glycosyltransferase 28 family. MurG subfamily.

Its subcellular location is the cell inner membrane. The catalysed reaction is di-trans,octa-cis-undecaprenyl diphospho-N-acetyl-alpha-D-muramoyl-L-alanyl-D-glutamyl-meso-2,6-diaminopimeloyl-D-alanyl-D-alanine + UDP-N-acetyl-alpha-D-glucosamine = di-trans,octa-cis-undecaprenyl diphospho-[N-acetyl-alpha-D-glucosaminyl-(1-&gt;4)]-N-acetyl-alpha-D-muramoyl-L-alanyl-D-glutamyl-meso-2,6-diaminopimeloyl-D-alanyl-D-alanine + UDP + H(+). It participates in cell wall biogenesis; peptidoglycan biosynthesis. Its function is as follows. Cell wall formation. Catalyzes the transfer of a GlcNAc subunit on undecaprenyl-pyrophosphoryl-MurNAc-pentapeptide (lipid intermediate I) to form undecaprenyl-pyrophosphoryl-MurNAc-(pentapeptide)GlcNAc (lipid intermediate II). The chain is UDP-N-acetylglucosamine--N-acetylmuramyl-(pentapeptide) pyrophosphoryl-undecaprenol N-acetylglucosamine transferase from Nostoc sp. (strain PCC 7120 / SAG 25.82 / UTEX 2576).